The primary structure comprises 264 residues: MEYNLKDKYILQLNEKEKALETRDLNIFYGEKQALFDGNLQFERYKITSLIGASGSGKSTFLRSLNRMNEGVADVKGSILYRGIDINSPKINVYEMRKYIGMVFQRPNPFSKSIYENITFALKENGIKDKEKLAEIVETSLKQAALWDEVKDDLNKSALALSGGQQQRLCIARAIAMKPDILLLDEPASALDPISTAKIEETLLELKEKYTLIIVTHNMQQASRISDYTAFFHLGNVIEYNKTKNIFTNPKIKLTEDYISGNFG.

The 240-residue stretch at 20 to 259 (LETRDLNIFY…PKIKLTEDYI (240 aa)) folds into the ABC transporter domain. Position 52–59 (52–59 (GASGSGKS)) interacts with ATP.

This sequence belongs to the ABC transporter superfamily. Phosphate importer (TC 3.A.1.7) family. In terms of assembly, the complex is composed of two ATP-binding proteins (PstB), two transmembrane proteins (PstC and PstA) and a solute-binding protein (PstS).

The protein localises to the cell membrane. It catalyses the reaction phosphate(out) + ATP + H2O = ADP + 2 phosphate(in) + H(+). Part of the ABC transporter complex PstSACB involved in phosphate import. Responsible for energy coupling to the transport system. The sequence is that of Phosphate import ATP-binding protein PstB 1 from Ligilactobacillus salivarius (strain UCC118) (Lactobacillus salivarius).